Here is a 496-residue protein sequence, read N- to C-terminus: Lysine--tRNA ligase (496 aa).

The Mg(2+) site is built by Glu409 and Glu416.

The protein belongs to the class-II aminoacyl-tRNA synthetase family. As to quaternary structure, homodimer. Mg(2+) serves as cofactor.

The protein localises to the cytoplasm. The enzyme catalyses tRNA(Lys) + L-lysine + ATP = L-lysyl-tRNA(Lys) + AMP + diphosphate. This chain is Lysine--tRNA ligase, found in Streptococcus agalactiae serotype III (strain NEM316).